A 166-amino-acid chain; its full sequence is Interferon gamma (166 aa).

An N-terminal signal peptide occupies residues 1–23 (MNYTSFILAFQLCAILGSSTYYC). Gln24 is subject to Pyrrolidone carboxylic acid. Residues Asn39 and Asn106 are each glycosylated (N-linked (GlcNAc...) asparagine). The disordered stretch occupies residues 147 to 166 (ANLRKRKRSQNPFRGRRALQ). Basic residues predominate over residues 148-166 (NLRKRKRSQNPFRGRRALQ).

This sequence belongs to the type II (or gamma) interferon family. As to quaternary structure, homodimer. Interacts with IFNGR1 (via extracellular domain); this interaction promotes IFNGR1 dimerization. As to expression, released primarily from activated T lymphocytes.

Its subcellular location is the secreted. Type II interferon produced by immune cells such as T-cells and NK cells that plays crucial roles in antimicrobial, antiviral, and antitumor responses by activating effector immune cells and enhancing antigen presentation. Primarily signals through the JAK-STAT pathway after interaction with its receptor IFNGR1 to affect gene regulation. Upon IFNG binding, IFNGR1 intracellular domain opens out to allow association of downstream signaling components JAK2, JAK1 and STAT1, leading to STAT1 activation, nuclear translocation and transcription of IFNG-regulated genes. Many of the induced genes are transcription factors such as IRF1 that are able to further drive regulation of a next wave of transcription. Plays a role in class I antigen presentation pathway by inducing a replacement of catalytic proteasome subunits with immunoproteasome subunits. In turn, increases the quantity, quality, and repertoire of peptides for class I MHC loading. Increases the efficiency of peptide generation also by inducing the expression of activator PA28 that associates with the proteasome and alters its proteolytic cleavage preference. Up-regulates as well MHC II complexes on the cell surface by promoting expression of several key molecules such as cathepsins B/CTSB, H/CTSH, and L/CTSL. Participates in the regulation of hematopoietic stem cells during development and under homeostatic conditions by affecting their development, quiescence, and differentiation. The protein is Interferon gamma (IFNG) of Equus asinus (Donkey).